The primary structure comprises 64 residues: uncharacterized protein (64 aa).

Positions 1–14 (MFNFDPTDQPTDQH) are enriched in polar residues. The tract at residues 1-42 (MFNFDPTDQPTDQHLLQLPTDPHPLQQPIDPHPPPQPNNNLP) is disordered.

This is an uncharacterized protein from Dictyostelium discoideum (Social amoeba).